Here is a 313-residue protein sequence, read N- to C-terminus: Protein EMSY-LIKE 2 (313 aa).

One can recognise an ENT domain in the interval 1–88 (MEAQIHILEQ…HQSLDVHPSP (88 aa)). Residues 35-58 (MTNLRKELRISDDENRQLLNNVHN) adopt a coiled-coil conformation. 2 disordered regions span residues 84–106 (VHPS…YPSI) and 195–229 (LNVG…REHL). Residues 206 to 219 (GNRRTLSHGGRGRG) show a composition bias toward basic residues. Residues 267 to 293 (HELDKAKKLLKEHEQALIAAIARLTDA) are a coiled coil. The residue at position 294 (Ser-294) is a Phosphoserine. The segment at 294–313 (SDYESDGEEPYSHELPMLLG) is disordered.

As to quaternary structure, interacts with EDM2 in nucleus.

The protein localises to the nucleus. Its function is as follows. Probably involved in the regulation of chromatin states. Contributes to RPP7-mediated and basal immunity, especially against Hyaloperonospora arabidopsidis isolate Hiks1. Regulates negatively EDM2-dependent floral transition. The chain is Protein EMSY-LIKE 2 from Arabidopsis thaliana (Mouse-ear cress).